A 465-amino-acid polypeptide reads, in one-letter code: MIVFVRFNSSHGFPVEVDSDTSIFQLKEVVAKRQGVPADQLRVIFAGKELRNDWTVQNCDLDQQSIVHIVQRPWRKGQEMNATGGDDPRNAAGGCEREPQSLTRVDLSSSVLPGDSVGLAVILHTDSRKDSPPAGSPAGRSIYNSFYVYCKGPCQRVQPGKLRVQCSTCRQATLTLTQGPSCWDDVLIPNRMSGECQSPHCPGTSAEFFFKCGAHPTSDKETSVALHLIATNSRNITCITCTDVRSPVLVFQCNSRHVICLDCFHLYCVTRLNDRQFVHDPQLGYSLPCVAGCPNSLIKELHHFRILGEEQYNRYQQYGAEECVLQMGGVLCPRPGCGAGLLPEPDQRKVTCEGGNGLGCGFAFCRECKEAYHEGECSAVFEASGTTTQAYRVDERAAEQARWEAASKETIKKTTKPCPRCHVPVEKNGGCMHMKCPQPQCRLEWCWNCGCEWNRVCMGDHWFDV.

Residues 1 to 76 (MIVFVRFNSS…VHIVQRPWRK (76 aa)) enclose the Ubiquitin-like domain. Serine 65 is modified (phosphoserine; by PINK1). Residues 77–99 (GQEMNATGGDDPRNAAGGCEREP) are disordered. The necessary for PINK1-dependent localization to mitochondria stretch occupies residues 77 to 237 (GQEMNATGGD…LIATNSRNIT (161 aa)). The segment at 141-225 (SIYNSFYVYC…PTSDKETSVA (85 aa)) adopts an RING-type 0; atypical zinc-finger fold. Threonine 175 carries the phosphothreonine; by PINK1 modification. The SYT11 binding 1 stretch occupies residues 204–238 (TSAEFFFKCGAHPTSDKETSVALHLIATNSRNITC). Threonine 217 carries the post-translational modification Phosphothreonine. The interval 234 to 465 (RNITCITCTD…VCMGDHWFDV (232 aa)) is TRIAD supradomain. Residues cysteine 238, cysteine 241, cysteine 253, histidine 257, cysteine 260, cysteine 263, cysteine 289, cysteine 293, cysteine 332, and cysteine 337 each contribute to the Zn(2+) site. The segment at 238–293 (CITCTDVRSPVLVFQCNSRHVICLDCFHLYCVTRLNDRQFVHDPQLGYSLPCVAGC) adopts an RING-type 1 zinc-finger fold. The SYT11 binding 2 stretch occupies residues 257–293 (HVICLDCFHLYCVTRLNDRQFVHDPQLGYSLPCVAGC). The IBR-type zinc finger occupies 313–377 (NRYQQYGAEE…CKEAYHEGEC (65 aa)). Lysine 349 participates in a covalent cross-link: Glycyl lysine isopeptide (Lys-Gly) (interchain with G-Cter in ISG15). Cysteine 352, cysteine 360, cysteine 365, and cysteine 368 together coordinate Zn(2+). Lysine 369 is covalently cross-linked (Glycyl lysine isopeptide (Lys-Gly) (interchain with G-Cter in ISG15)). Positions 373 and 377 each coordinate Zn(2+). Residues 378-410 (SAVFEASGTTTQAYRVDERAAEQARWEAASKET) are REP. 2 residues coordinate Zn(2+): cysteine 418 and cysteine 421. Residues 418–449 (CPRCHVPVEKNGGCMHMKCPQPQCRLEWCWNC) form an RING-type 2; atypical zinc finger. The active site involves cysteine 431. Positions 436, 441, 446, 449, 457, and 461 each coordinate Zn(2+).

It belongs to the RBR family. Parkin subfamily. Forms an E3 ubiquitin ligase complex with UBE2L3 or UBE2L6. Mediates 'Lys-63'-linked polyubiquitination by associating with UBE2V1. Part of a SCF-like complex, consisting of PRKN, CUL1 and FBXW7. Interacts with SNCAIP. Binds to the C2A and C2B domains of SYT11. Interacts and regulates the turnover of SEPTIN5. Part of a complex, including STUB1, HSP70 and GPR37. The amount of STUB1 in the complex increases during ER stress. STUB1 promotes the dissociation of HSP70 from PRKN and GPR37, thus facilitating PRKN-mediated GPR37 ubiquitination. HSP70 transiently associates with unfolded GPR37 and inhibits the E3 activity of PRKN, whereas, STUB1 enhances the E3 activity of PRKN through promotion of dissociation of HSP70 from PRKN-GPR37 complexes. Interacts with PSMD4 and PACRG. Interacts with LRRK2. Interacts with RANBP2. Interacts with SUMO1 but not SUMO2, which promotes nuclear localization and autoubiquitination. Interacts (via first RING-type domain) with AIMP2 (via N-terminus). Interacts with PSMA7 and RNF41. Interacts with PINK1. Forms a complex with PINK1 and PARK7. Interacts with CHPF, the interaction with isoform 2 may facilitate PRKN transport into the mitochondria. Interacts with MFN2 (phosphorylated), promotes PRKN localization in dysfunctional depolarized mitochondria. Interacts with FBXO7; this promotes translocation to dysfunctional depolarized mitochondria. Interacts with ZNF746. Interacts with heat shock protein 70 family members, including HSPA1L, HSPA1A and HSPA8; interaction HSPA1L promotes translocation to damaged mitochondria. Interacts with BAG4 and, to a lesser extent, BAG5; interaction with BAG4 inhibits translocation to damaged mitochondria. Forms a complex with PRKN and PARK7. Interacts with AMBRA1. ISGylated. Conjugated to ubiquitin-like protein ISG15 upon IFN-beta stimulation. ISGylation positively regulates its E3 ligase activity. In terms of processing, auto-ubiquitinates in an E2-dependent manner leading to its own degradation. Also polyubiquitinated by RNF41 for proteasomal degradation. Post-translationally, S-nitrosylated. The inhibition of PRKN ubiquitin E3 ligase activity by S-nitrosylation could contribute to the degenerative process in PD by impairing the ubiquitination of PRKN substrates. Phosphorylated. Activation requires phosphorylation at Ser-65 by PINK1 and binding to PINK1 phosphorylated ubiquitin. Phosphorylation at Thr-175 by PINK1 and at Thr-217 is important for mitochondrial localization. In terms of tissue distribution, highly expressed in the brain including the substantia nigra. Expressed in heart, testis and skeletal muscle. Expression is down-regulated or absent in tumor biopsies, and absent in the brain of PARK2 patients. Overexpression protects dopamine neurons from kainate-mediated apoptosis. Found in serum (at protein level).

The protein resides in the cytoplasm. Its subcellular location is the cytosol. It is found in the nucleus. It localises to the endoplasmic reticulum. The protein localises to the mitochondrion. The protein resides in the mitochondrion outer membrane. Its subcellular location is the cell projection. It is found in the neuron projection. It localises to the postsynaptic density. The protein localises to the presynapse. It catalyses the reaction [E2 ubiquitin-conjugating enzyme]-S-ubiquitinyl-L-cysteine + [acceptor protein]-L-lysine = [E2 ubiquitin-conjugating enzyme]-L-cysteine + [acceptor protein]-N(6)-ubiquitinyl-L-lysine.. It participates in protein modification; protein ubiquitination. With respect to regulation, in the autoinhibited state the side chain of Phe-463 inserts into a hydrophobic groove in RING-0, occluding the ubiquitin acceptor site Cys-431, whereas the REP repressor element binds RING-1 and blocks its E2-binding site. Activation of PRKN requires 2 steps: (1) phosphorylation at Ser-65 by PINK1 and (2) binding to phosphorylated ubiquitin, leading to unlock repression of the catalytic Cys-431 by the RING-0 region via an allosteric mechanism and converting PRKN to its fully-active form. According to another report, phosphorylation at Ser-65 by PINK1 is not essential for activation and only binding to phosphorylated ubiquitin is essential to unlock repression. In addition, ISG15 conjugation positively regulates its ubiquitin E3 ligase activity by suppressing the intramolecular interaction that maintains its autoinhibited conformation. In terms of biological role, functions within a multiprotein E3 ubiquitin ligase complex, catalyzing the covalent attachment of ubiquitin moieties onto substrate proteins. Substrates include SYT11 and VDAC1. Other substrates are BCL2, CCNE1, GPR37, RHOT1/MIRO1, MFN1, MFN2, STUB1, SNCAIP, SEPTIN5, TOMM20, USP30, ZNF746, MIRO1 and AIMP2. Mediates monoubiquitination as well as 'Lys-6', 'Lys-11', 'Lys-48'-linked and 'Lys-63'-linked polyubiquitination of substrates depending on the context. Participates in the removal and/or detoxification of abnormally folded or damaged protein by mediating 'Lys-63'-linked polyubiquitination of misfolded proteins such as PARK7: 'Lys-63'-linked polyubiquitinated misfolded proteins are then recognized by HDAC6, leading to their recruitment to aggresomes, followed by degradation. Mediates 'Lys-63'-linked polyubiquitination of a 22 kDa O-linked glycosylated isoform of SNCAIP, possibly playing a role in Lewy-body formation. Mediates monoubiquitination of BCL2, thereby acting as a positive regulator of autophagy. Protects against mitochondrial dysfunction during cellular stress, by acting downstream of PINK1 to coordinate mitochondrial quality control mechanisms that remove and replace dysfunctional mitochondrial components. Depending on the severity of mitochondrial damage and/or dysfunction, activity ranges from preventing apoptosis and stimulating mitochondrial biogenesis to regulating mitochondrial dynamics and eliminating severely damaged mitochondria via mitophagy. Activation and recruitment onto the outer membrane of damaged/dysfunctional mitochondria (OMM) requires PINK1-mediated phosphorylation of both PRKN and ubiquitin. After mitochondrial damage, functions with PINK1 to mediate the decision between mitophagy or preventing apoptosis by inducing either the poly- or monoubiquitination of VDAC1, respectively; polyubiquitination of VDAC1 promotes mitophagy, while monoubiquitination of VDAC1 decreases mitochondrial calcium influx which ultimately inhibits apoptosis. When cellular stress results in irreversible mitochondrial damage, promotes the autophagic degradation of dysfunctional depolarized mitochondria (mitophagy) by promoting the ubiquitination of mitochondrial proteins such as TOMM20, RHOT1/MIRO1, MFN1 and USP30. Preferentially assembles 'Lys-6'-, 'Lys-11'- and 'Lys-63'-linked polyubiquitin chains, leading to mitophagy. The PINK1-PRKN pathway also promotes fission of damaged mitochondria by PINK1-mediated phosphorylation which promotes the PRKN-dependent degradation of mitochondrial proteins involved in fission such as MFN2. This prevents the refusion of unhealthy mitochondria with the mitochondrial network or initiates mitochondrial fragmentation facilitating their later engulfment by autophagosomes. Regulates motility of damaged mitochondria via the ubiquitination and subsequent degradation of MIRO1 and MIRO2; in motor neurons, this likely inhibits mitochondrial intracellular anterograde transport along the axons which probably increases the chance of the mitochondria undergoing mitophagy in the soma. Involved in mitochondrial biogenesis via the 'Lys-48'-linked polyubiquitination of transcriptional repressor ZNF746/PARIS which leads to its subsequent proteasomal degradation and allows activation of the transcription factor PPARGC1A. Limits the production of reactive oxygen species (ROS). Regulates cyclin-E during neuronal apoptosis. In collaboration with CHPF isoform 2, may enhance cell viability and protect cells from oxidative stress. Independently of its ubiquitin ligase activity, protects from apoptosis by the transcriptional repression of p53/TP53. May protect neurons against alpha synuclein toxicity, proteasomal dysfunction, GPR37 accumulation, and kainate-induced excitotoxicity. May play a role in controlling neurotransmitter trafficking at the presynaptic terminal and in calcium-dependent exocytosis. May represent a tumor suppressor gene. The protein is E3 ubiquitin-protein ligase parkin of Homo sapiens (Human).